The following is a 99-amino-acid chain: Plastocyanin (99 aa).

The Plastocyanin-like domain maps to 1–99; sequence VEVLMGGSGG…IGMSGIVTVN (99 aa). Residues H37, C84, H87, and M92 each coordinate Cu cation.

Belongs to the plastocyanin family. The cofactor is Cu(2+).

It localises to the plastid. The protein resides in the chloroplast thylakoid membrane. Functionally, participates in electron transfer between P700 and the cytochrome b6-f complex in photosystem I. The chain is Plastocyanin (PETE) from Ginkgo biloba (Ginkgo).